A 152-amino-acid polypeptide reads, in one-letter code: Ribosome maturation factor RimP (152 aa).

Belongs to the RimP family.

It is found in the cytoplasm. Its function is as follows. Required for maturation of 30S ribosomal subunits. The sequence is that of Ribosome maturation factor RimP from Ruminiclostridium cellulolyticum (strain ATCC 35319 / DSM 5812 / JCM 6584 / H10) (Clostridium cellulolyticum).